Reading from the N-terminus, the 430-residue chain is RPM1 interacting protein 13 (430 aa).

Residues 1–21 (MGSGNHVDIVDVSSGEEDVDT) form a disordered region. A nuclear localization region spans residues 231 to 300 (RHRIRQPIPH…QVSQSSHHSS (70 aa)).

As to quaternary structure, interacts with RPM1 (via its NB-ARC domain). Binds to ARF1 in the nucleus.

The protein localises to the nucleus. Its function is as follows. Resistance protein interactor which positively enhances RPM1-mediated resistance to necrotrophic bacterial pathogens Pseudomonas syringae pv. tomato DC3000 harboring type III effector protein AvrRpm1 or AvrB, but prevents the hypersensitive response (HR) controlled by RPM1. Together with ARF1, promotes leaf senescence and cell death, probably by facilitating the translocation of ARF1 into the nucleus, and activates ROS-related enzymes (e.g. POD, CAT and SOD). The protein is RPM1 interacting protein 13 of Arabidopsis thaliana (Mouse-ear cress).